The following is a 229-amino-acid chain: E3 ubiquitin-protein ligase RNF114 (229 aa).

The interval 1 to 23 (MAAAQPESRDGAAQSAKPASETD) is disordered. The RING-type zinc-finger motif lies at 30–69 (CPVCLEVFEKPVQVPCGHVFCSACLQECLKPKKPVCGVCR). Residues cysteine 92 and cysteine 95 each contribute to the Zn(2+) site. The segment at 92–111 (CHGCRKNFILSKIRAHVTSC) adopts a C2HC RNF-type zinc-finger fold. Residue lysine 103 is modified to N6-acetyllysine. Residues histidine 107 and cysteine 111 each contribute to the Zn(2+) site. Lysine 113 is subject to N6-acetyllysine.

As to quaternary structure, interacts with XAF1, the interaction increases XAF1 stability and proapoptotic effects, and may regulate IFN signaling. In terms of processing, autoubiquitinated. Polyubiquitinated in the presence of E2 enzymes UBE2D1, UBE2D2 and UBE2D3, but only monoubiquitinated in the presence of UBE2E1.

Its subcellular location is the cytoplasm. It localises to the nucleus. The enzyme catalyses S-ubiquitinyl-[E2 ubiquitin-conjugating enzyme]-L-cysteine + [acceptor protein]-L-lysine = [E2 ubiquitin-conjugating enzyme]-L-cysteine + N(6)-ubiquitinyl-[acceptor protein]-L-lysine.. Its pathway is protein modification; protein ubiquitination. E3 ubiquitin-protein ligase that promotes the ubiquitination of various substrates. In turn, participates in the regulation of many biological processes including cell cycle, apoptosis, osteoclastogenesis as well as innate or adaptive immunity. Acts as negative regulator of NF-kappa-B-dependent transcription by promoting the ubiquitination and stabilization of the NF-kappa-B inhibitor TNFAIP3. May promote the ubiquitination of TRAF6 as well. Also acts as a negative regulator of T-cell activation. Inhibits cellular dsRNA responses and interferon production by targeting MAVS component for proteasomal degradation. Ubiquitinates the CDK inhibitor CDKN1A leading to its degradationand probably also CDKN1B and CDKN1C. This activity stimulates cell cycle G1-to-S phase transition and suppresses cellular senescence. May play a role in spermatogenesis. The chain is E3 ubiquitin-protein ligase RNF114 (Rnf114) from Mus musculus (Mouse).